The sequence spans 199 residues: Glycerol-3-phosphate acyltransferase (199 aa).

5 helical membrane passes run 5 to 25 (AFLV…VALV), 51 to 71 (KLGV…VLCA), 79 to 99 (VFLS…VFLY), 112 to 132 (VFLG…VAVI), and 153 to 173 (CAWL…GLVI).

Belongs to the PlsY family. As to quaternary structure, probably interacts with PlsX.

The protein localises to the cell inner membrane. The enzyme catalyses an acyl phosphate + sn-glycerol 3-phosphate = a 1-acyl-sn-glycero-3-phosphate + phosphate. It participates in lipid metabolism; phospholipid metabolism. Functionally, catalyzes the transfer of an acyl group from acyl-phosphate (acyl-PO(4)) to glycerol-3-phosphate (G3P) to form lysophosphatidic acid (LPA). This enzyme utilizes acyl-phosphate as fatty acyl donor, but not acyl-CoA or acyl-ACP. The protein is Glycerol-3-phosphate acyltransferase of Solidesulfovibrio magneticus (strain ATCC 700980 / DSM 13731 / RS-1) (Desulfovibrio magneticus).